The primary structure comprises 426 residues: Serine hydroxymethyltransferase 1 (426 aa).

Residues Leu118 and 122–124 each bind (6S)-5,6,7,8-tetrahydrofolate; that span reads GHL. Residue Lys227 is modified to N6-(pyridoxal phosphate)lysine.

This sequence belongs to the SHMT family. As to quaternary structure, homodimer. The cofactor is pyridoxal 5'-phosphate.

It localises to the cytoplasm. The catalysed reaction is (6R)-5,10-methylene-5,6,7,8-tetrahydrofolate + glycine + H2O = (6S)-5,6,7,8-tetrahydrofolate + L-serine. Its pathway is one-carbon metabolism; tetrahydrofolate interconversion. It participates in amino-acid biosynthesis; glycine biosynthesis; glycine from L-serine: step 1/1. Catalyzes the reversible interconversion of serine and glycine with tetrahydrofolate (THF) serving as the one-carbon carrier. This reaction serves as the major source of one-carbon groups required for the biosynthesis of purines, thymidylate, methionine, and other important biomolecules. Also exhibits THF-independent aldolase activity toward beta-hydroxyamino acids, producing glycine and aldehydes, via a retro-aldol mechanism. The chain is Serine hydroxymethyltransferase 1 from Mycobacterium bovis (strain ATCC BAA-935 / AF2122/97).